The chain runs to 445 residues: Neuropeptide Y receptor type 5 (445 aa).

At 1–42 (MEFKLEEHFNKTFVTENNTAAARNAAFPAWEDYRGSVDDLQY) the chain is on the extracellular side. N-linked (GlcNAc...) asparagine glycosylation is found at asparagine 10 and asparagine 17. Residues 43-63 (FLIGLYTFVSLLGFMGNLLIL) traverse the membrane as a helical segment. Residues 64-77 (MAVMKKRNQKTTVN) lie on the Cytoplasmic side of the membrane. The helical transmembrane segment at 78–98 (FLIGNLAFSDILVVLFCSPFT) threads the bilayer. Over 99–117 (LTSVLLDQWMFGKAMCHIM) the chain is Extracellular. Residues cysteine 114 and cysteine 198 are joined by a disulfide bond. The chain crosses the membrane as a helical span at residues 118 to 138 (PFLQCVSVLVSTLILISIAIV). The Cytoplasmic segment spans residues 139 to 156 (RYHMIKHPISNNLTANHG). The chain crosses the membrane as a helical span at residues 157 to 177 (YFLIATVWTLGFAICSPLPVF). The Extracellular portion of the chain corresponds to 178–208 (HSLVELKETFGSALLSSKYLCVESWPSDSYR). The helical transmembrane segment at 209-229 (IAFTISLLLVQYILPLVCLTV) threads the bilayer. Residues 230–368 (SHTSVCRSIS…KKRSRSVFYR (139 aa)) lie on the Cytoplasmic side of the membrane. The helical transmembrane segment at 369–389 (LTILILVFAVSWMPLHVFHVV) threads the bilayer. The Extracellular portion of the chain corresponds to 390–406 (TDFNDNLISNRHFKLVY). The chain crosses the membrane as a helical span at residues 407–427 (CICHLLGMMSCCLNPILYGFL). At 428–445 (NNGIKADLRALIHCLHMS) the chain is on the cytoplasmic side. Cysteine 441 carries the S-palmitoyl cysteine lipid modification.

It belongs to the G-protein coupled receptor 1 family. As to expression, brain; hypothalamus.

The protein localises to the cell membrane. In terms of biological role, receptor for neuropeptide Y and peptide YY. The activity of this receptor is mediated by G proteins that inhibit adenylate cyclase activity. Seems to be associated with food intake. Could be involved in feeding disorders. This is Neuropeptide Y receptor type 5 (Npy5r) from Rattus norvegicus (Rat).